Here is a 541-residue protein sequence, read N- to C-terminus: Molybdate transporter 1 (541 aa).

5 helical membrane passes run 24 to 44 (LLLS…PLLL), 58 to 78 (LLFS…PLPV), 98 to 118 (TVAA…TGGL), 137 to 157 (AGMS…GWLW), and 168 to 188 (GLGE…GLVV). The segment at 193–213 (QQQQQQQSGEKPQERRKKRSK) is disordered. A run of 2 helical transmembrane segments spans residues 214-234 (MPVQ…FAVV) and 287-307 (MAIA…SALA). Residues 317–366 (PQLYADDESSDSPLSPSPSASSSSLSSAPPQTPSAETPKPLSSPTSAEEG) are disordered. Over residues 327–351 (DSPLSPSPSASSSSLSSAPPQTPSA) the composition is skewed to low complexity. 2 helical membrane-spanning segments follow: residues 413-433 (IILL…PGLL) and 435-455 (LLGK…GVEL). A disordered region spans residues 510-541 (TEKGRGGEQGLLGEEEEEEEQGRVDEESPLLR).

This sequence belongs to the SLC26A/SulP transporter (TC 2.A.53) family.

The protein resides in the vacuole membrane. In terms of biological role, exports stored molybdate from the vacuole into the cytosol, making it available for molybdate cofactor (Moco) biosynthesis. Plays a role in molybdate homeostasis as high cytosolic levels of molybdate are toxic to cells. Not required for molybdate import into cells. In Neurospora crassa (strain ATCC 24698 / 74-OR23-1A / CBS 708.71 / DSM 1257 / FGSC 987), this protein is Molybdate transporter 1.